The following is a 231-amino-acid chain: uncharacterized protein (231 aa).

The N-terminal stretch at 1-17 (MFGKILTTSLLIAMTFA) is a signal peptide. The tract at residues 197 to 231 (KARKQQKNEGDDEETEDEQKIGSAIDGWVERQAKL) is disordered.

This is an uncharacterized protein from Caenorhabditis elegans.